A 333-amino-acid chain; its full sequence is MLFSMESILSSTKPKLEPPPKLEPEVTINEQVVDLPRSNTRLSEPSTSASVLEHDLKFGESRKRSRSLGDEPTEDEDGVPVRKANKRNHSTSSAADSSSDDAKDDDDDDDSTSRKSMSGHRKSSHAKPPYSYIALIAMSILNSPEKKLTLSEICEFIINKFEYYKEKFPAWQNSIRHNLSLNDCFVKVARGPGNPGKGNYWALDPNCEDMFDNGSFLRRRKRYKKNSDTYHEMMSHHPMPFPPFLPQGMPFPPRMMHPMANIPMLGHPMNPRAVPNMPAFFIPQNIDSQKLLSMMASRIMPMDAPVSSGQKRTSSSSSPNENGSSAVSDKLSA.

Positions 1–126 (MLFSMESILS…MSGHRKSSHA (126 aa)) are disordered. The segment covering 14–24 (PKLEPPPKLEP) has biased composition (basic and acidic residues). Polar residues predominate over residues 37–50 (RSNTRLSEPSTSAS). The span at 52–62 (LEHDLKFGESR) shows a compositional bias: basic and acidic residues. A compositionally biased stretch (acidic residues) spans 98 to 110 (SSDDAKDDDDDDD). A DNA-binding region (fork-head) is located at residues 127-221 (KPPYSYIALI…DNGSFLRRRK (95 aa)). Positions 304-333 (APVSSGQKRTSSSSSPNENGSSAVSDKLSA) are disordered. Over residues 307–333 (SSGQKRTSSSSSPNENGSSAVSDKLSA) the composition is skewed to low complexity.

Expressed in ventral body wall muscle. Expressed in the structural cells and two neurons of each ray in the male tail.

It is found in the nucleus. Probable transcription factor. Binds to DNA sequence motif 5'-CTGTTTCA-3'. Required for the migration of distal tip cells (DTC) and axonal growth-cones along the dorsal-ventral axis of the body wall, acting by cell autonomous repression of unc-129/TGF-beta expression in ventral body muscle during embyogenesis. Binds to the promoter region of the unc-129 gene. Plays a role in dorsal-ventral patterning and fate specification of the postembryonic mesoderm. Involved in male tail morphogenesis and in embryogenesis. Plays a role in the development of sensory neurons and is required to repress AWA fate and promote ASG fate in the ASG chemosensory neurons. Regulates expression of a class of small RNAs, known as 21U-RNAs. In Caenorhabditis elegans, this protein is Forkhead box protein unc-130.